Reading from the N-terminus, the 543-residue chain is Chaperonin GroEL (543 aa).

ATP contacts are provided by residues 29–32, 86–90, G413, 476–478, and D492; these read TLGP, DGTTT, and NAA.

This sequence belongs to the chaperonin (HSP60) family. As to quaternary structure, forms a cylinder of 14 subunits composed of two heptameric rings stacked back-to-back. Interacts with the co-chaperonin GroES.

Its subcellular location is the cytoplasm. The enzyme catalyses ATP + H2O + a folded polypeptide = ADP + phosphate + an unfolded polypeptide.. Functionally, together with its co-chaperonin GroES, plays an essential role in assisting protein folding. The GroEL-GroES system forms a nano-cage that allows encapsulation of the non-native substrate proteins and provides a physical environment optimized to promote and accelerate protein folding. This Streptococcus pyogenes serotype M18 (strain MGAS8232) protein is Chaperonin GroEL.